The primary structure comprises 724 residues: Probable metal-nicotianamine transporter YSL8 (724 aa).

The disordered stretch occupies residues 1–58; that stretch reads MRKGGLTPDRDRQIEEHELQETGISPDIERLKRNINATPYQREEEEEDREEQEESVEG. Positions 8 to 20 are enriched in basic and acidic residues; sequence PDRDRQIEEHELQ. S25 is modified (phosphoserine). A compositionally biased stretch (acidic residues) spans 43-56; sequence EEEEEDREEQEESV. Transmembrane regions (helical) follow at residues 72-92, 96-116, 144-164, 184-204, 245-265, 304-324, and 349-369; these read LTIR…FIVM, LTTG…FFFV, CVVA…LFAM, LGWM…SVVP, VLGK…FFTA, IINI…WPLI, and VFIA…KVLI. Residues 386–407 are disordered; sequence RSSLAHKEDPPASPASPLTPRI. Transmembrane regions (helical) follow at residues 423–443, 455–475, 478–497, 501–520, 541–561, 603–623, 641–661, and 679–699; these read IPSW…TAIL, IIVI…GAGL, WSLA…AWAG, GGLL…VSTA, FVSQ…VFWL, LMLC…KDCL, FFLG…LFVW, and GLIC…IAGV.

This sequence belongs to the YSL (TC 2.A.67.2) family.

It localises to the membrane. Functionally, may be involved in the transport of nicotianamine-chelated metals. This Arabidopsis thaliana (Mouse-ear cress) protein is Probable metal-nicotianamine transporter YSL8 (YSL8).